The following is a 210-amino-acid chain: uncharacterized protein (210 aa).

The first 21 residues, 1 to 21, serve as a signal peptide directing secretion; sequence MLKMNVKKALVILVALALVAA.

This is an uncharacterized protein from Archaeoglobus fulgidus (strain ATCC 49558 / DSM 4304 / JCM 9628 / NBRC 100126 / VC-16).